The chain runs to 345 residues: S-adenosylmethionine:tRNA ribosyltransferase-isomerase (345 aa).

This sequence belongs to the QueA family. Monomer.

Its subcellular location is the cytoplasm. The enzyme catalyses 7-aminomethyl-7-carbaguanosine(34) in tRNA + S-adenosyl-L-methionine = epoxyqueuosine(34) in tRNA + adenine + L-methionine + 2 H(+). Its pathway is tRNA modification; tRNA-queuosine biosynthesis. Its function is as follows. Transfers and isomerizes the ribose moiety from AdoMet to the 7-aminomethyl group of 7-deazaguanine (preQ1-tRNA) to give epoxyqueuosine (oQ-tRNA). The sequence is that of S-adenosylmethionine:tRNA ribosyltransferase-isomerase from Shewanella putrefaciens (strain CN-32 / ATCC BAA-453).